A 570-amino-acid chain; its full sequence is Sulfite reductase [NADPH] hemoprotein beta-component (570 aa).

4 residues coordinate [4Fe-4S] cluster: Cys-434, Cys-440, Cys-479, and Cys-483. Residue Cys-483 coordinates siroheme.

The protein belongs to the nitrite and sulfite reductase 4Fe-4S domain family. As to quaternary structure, alpha(8)-beta(8). The alpha component is a flavoprotein, the beta component is a hemoprotein. The cofactor is siroheme. It depends on [4Fe-4S] cluster as a cofactor.

The catalysed reaction is hydrogen sulfide + 3 NADP(+) + 3 H2O = sulfite + 3 NADPH + 4 H(+). It participates in sulfur metabolism; hydrogen sulfide biosynthesis; hydrogen sulfide from sulfite (NADPH route): step 1/1. Its function is as follows. Component of the sulfite reductase complex that catalyzes the 6-electron reduction of sulfite to sulfide. This is one of several activities required for the biosynthesis of L-cysteine from sulfate. The chain is Sulfite reductase [NADPH] hemoprotein beta-component from Cronobacter sakazakii (strain ATCC BAA-894) (Enterobacter sakazakii).